The sequence spans 455 residues: MFS-type transporter SLC18B1 (455 aa).

Residue Met1 is modified to N-acetylmethionine. The segment at 1–26 (MDTAGPPAPAGTEGDGPGGSTGETSR) is disordered. At 1-32 (MDTAGPPAPAGTEGDGPGGSTGETSRRLSKEQ) the chain is on the cytoplasmic side. Ser20 is subject to Phosphoserine. The helical transmembrane segment at 33 to 53 (IFVLVSAASMNLGCMMTYSIL) threads the bilayer. Residues 54-69 (GPFFPKEAEKKGASNT) lie on the Extracellular side of the membrane. Residues 70–90 (TIGMIFGCYALFELLASLVFG) form a helical membrane-spanning segment. The Cytoplasmic portion of the chain corresponds to 91-99 (KYLVHIGAK). A helical transmembrane segment spans residues 100–120 (FMFIAGMFVSGGVTILFGVLD). The Extracellular portion of the chain corresponds to 121-126 (QLPEGP). A helical membrane pass occupies residues 127–147 (IFIAMCFLVRIVDAIGFGAAI). Over 148 to 166 (TASSSILAKAFPNNVATVM) the chain is Cytoplasmic. A helical transmembrane segment spans residues 167–187 (GSLEVFSGLGLVAGPPLGGLL). The Extracellular segment spans residues 188 to 194 (YQSFGYE). A helical membrane pass occupies residues 195–215 (VPFIFLGCIVLLMIPLNLCIL). Over 216 to 232 (PSYESDAGKQSFWKLVT) the chain is Cytoplasmic. A helical membrane pass occupies residues 233–253 (LPKIGLIAFVIISLSSCFGFL). The Extracellular portion of the chain corresponds to 254 to 271 (DPTLSLFVMKKFSLSTGY). The chain crosses the membrane as a helical span at residues 272–292 (VGLVFLGLSLSYAISSPLFGL). Topologically, residues 293–303 (LSDKMPNLRKW) are cytoplasmic. A helical transmembrane segment spans residues 304–324 (FLVFGNLITAGCYMLLGPIPL). Over 325-330 (LHIKSQ) the chain is Extracellular. Residues 331–351 (LWLLVLVLVINGVSAGMSIIP) traverse the membrane as a helical segment. The Cytoplasmic segment spans residues 352-376 (TFPEMLSCAYANGFEDGISTLGLVS). Residues 377–397 (GLFGAMWSVGAFMGPILGGFL) form a helical membrane-spanning segment. Residues 398 to 406 (CEKIGFEWA) lie on the Extracellular side of the membrane. The helical transmembrane segment at 407–427 (AAIQGLWTLLSGVAMALFYLW) threads the bilayer. At 428 to 455 (EDSTMRRSKAQNILGTEEEQAALLPNDT) the chain is on the cytoplasmic side.

Expressed in brain structures, particularly in hippocampus, cortex, and cerebellum (at protein level). Expressed in astrocytes and hippocampal neurons (at protein level). Expressed in peritoneal mast cells.

It is found in the cytoplasmic vesicle. The protein localises to the secretory vesicle membrane. It localises to the secretory vesicle. The protein resides in the synaptic vesicle membrane. The enzyme catalyses spermine(in) + n H(+)(out) = spermine(out) + n H(+)(in). The catalysed reaction is spermidine(in) + n H(+)(out) = spermidine(out) + n H(+)(in). It catalyses the reaction serotonin(in) + n H(+)(out) = serotonin(out) + n H(+)(in). In terms of biological role, proton-coupled polyamine antiporter involved in the translocation of polyamines from cytosol into secretory vesicles prior to their release via exocytosis. Uses the electrochemical proton gradient generated by a V-type proton-pumping ATPase to couple the efflux of protons with the uptake of a polyamine molecule. Facilitates vesicular storage of spermine and spermidine in astrocytes with an impact on glutamatergic neuronal transmission and memory formation. Upon antigen stimulation, regulates polyamine accumulation and release in mast cell secretory granules, which in turn potentiates mast cell degranulation and histamine secretion. The chain is MFS-type transporter SLC18B1 from Rattus norvegicus (Rat).